Reading from the N-terminus, the 330-residue chain is tRNA uridine(34) hydroxylase (330 aa).

Residues serine 123 to serine 217 form the Rhodanese domain. Cysteine 177 serves as the catalytic Cysteine persulfide intermediate.

Belongs to the TrhO family.

It catalyses the reaction uridine(34) in tRNA + AH2 + O2 = 5-hydroxyuridine(34) in tRNA + A + H2O. In terms of biological role, catalyzes oxygen-dependent 5-hydroxyuridine (ho5U) modification at position 34 in tRNAs. In Shewanella sp. (strain ANA-3), this protein is tRNA uridine(34) hydroxylase.